The chain runs to 661 residues: Vasorin (661 aa).

The N-terminal stretch at 1-19 (MWHLLVWIILLATAQQMIT) is a signal peptide. The LRRNT domain maps to 20–50 (EGCPAGCQCNTPQTVFCLARKNSNFPRSVPP). Over 20-563 (EGCPAGCQCN…VTQSQEGNLT (544 aa)) the chain is Extracellular. LRR repeat units follow at residues 52–72 (TLNLYVFENGISSIEESSFIG), 75–96 (GLHLLDLSHNQLSSLPGGVFRN), 99–120 (NLSNLDLTSNQLTEISADTFQG), 123–144 (RLERLYLNGNRIRSIHPEAFKG), 147–168 (SLLELKLSNNQLVTPPAFSLPH), 169–189 (LLLLDLSYNAIPVIQQGVFNA), 191–212 (NIESLRLAGLGLKEVPEELLSG), 215–237 (NLHELDLSDNQLDKVPPGLHGLT), 238–258 (KLNIAGNVGFSQIQVDDLSNL), and 259–281 (PALQELDLSGLSLQTLPKGLFRS). N99 carries N-linked (GlcNAc...) asparagine glycosylation. One can recognise an LRRCT domain in the interval 293 to 346 (NPFNCVCSLGWLSEWMRVSGVVLLRPDETRCHFPPKNAGKTLRQLRDSEYGCPA). The segment covering 348–385 (TTIQMPSTMPPSTTTGPPTTTKHLQTEAPTTASTTTTT) has biased composition (low complexity). The disordered stretch occupies residues 348-395 (TTIQMPSTMPPSTTTGPPTTTKHLQTEAPTTASTTTTTIPHQEQEEDT). The 38-residue stretch at 403-440 (EDTLCPPQTCLNGGSCHLDPTGQLECECPPGFQGTYCE) folds into the EGF-like domain. Cystine bridges form between C407/C418, C412/C428, and C430/C439. A Fibronectin type-III domain is found at 455 to 543 (EQVKIIEVTV…EEDLCTETHT (89 aa)). 2 N-linked (GlcNAc...) asparagine glycosylation sites follow: N518 and N561. A helical membrane pass occupies residues 564-584 (LVLVPAVAAGILLSAAVAAAA). Residues 585 to 661 (CYARRRKGKG…PTGRLPHSYF (77 aa)) lie on the Cytoplasmic side of the membrane. A disordered region spans residues 591–661 (KGKGHSVEDG…PTGRLPHSYF (71 aa)). Positions 606–623 (DGVKKGLDGKGEVKKLSE) are enriched in basic and acidic residues.

It is found in the membrane. Its function is as follows. May act as an inhibitor of TGF-beta signaling. The protein is Vasorin (vasn) of Xenopus tropicalis (Western clawed frog).